Reading from the N-terminus, the 344-residue chain is NADH-ubiquinone oxidoreductase chain 2 (344 aa).

11 helical membrane passes run 1-21 (MNPLALTIFLLSLAIGTTITL), 24-44 (FHWLLAWIGLEINTLAIIPLM), 59-79 (YFLTQAAASALVLFSSLISAW), 94-114 (MNILSIALMMKLGLAPLHFWI), 121-141 (ISLPTGLILSTWQKIAPMALL), 150-170 (LNLTIALGLTSIMVGGWGGIG), 177-197 (IMAFSSIGHLGWIIVILKFDP), 201-221 (LLNFVLYIIMTAAMFMSLTTI), 245-265 (LILLSLAGLPPLTGFTPKLLI), 273-293 (NATLLAVMVMFISLLALFFYI), and 324-344 (TAIMNTMALILLPITPTLLLL).

This sequence belongs to the complex I subunit 2 family.

It localises to the mitochondrion inner membrane. It catalyses the reaction a ubiquinone + NADH + 5 H(+)(in) = a ubiquinol + NAD(+) + 4 H(+)(out). Functionally, core subunit of the mitochondrial membrane respiratory chain NADH dehydrogenase (Complex I) that is believed to belong to the minimal assembly required for catalysis. Complex I functions in the transfer of electrons from NADH to the respiratory chain. The immediate electron acceptor for the enzyme is believed to be ubiquinone. The sequence is that of NADH-ubiquinone oxidoreductase chain 2 (MT-ND2) from Aquarana catesbeiana (American bullfrog).